Reading from the N-terminus, the 397-residue chain is Phosphoglycerate kinase (397 aa).

Substrate is bound by residues 25–27, Arg41, 64–67, Arg118, and Arg151; these read DLN and HLGR. ATP-binding positions include Lys202, Glu324, and 350–353; that span reads GGDT.

Belongs to the phosphoglycerate kinase family. As to quaternary structure, monomer.

It localises to the cytoplasm. It catalyses the reaction (2R)-3-phosphoglycerate + ATP = (2R)-3-phospho-glyceroyl phosphate + ADP. It functions in the pathway carbohydrate degradation; glycolysis; pyruvate from D-glyceraldehyde 3-phosphate: step 2/5. The polypeptide is Phosphoglycerate kinase (Janthinobacterium sp. (strain Marseille) (Minibacterium massiliensis)).